A 74-amino-acid polypeptide reads, in one-letter code: Protein A30 homolog (74 aa).

This sequence belongs to the chordopoxvirinae A30 family. Interacts with protein G7; the interaction stabilizes both proteins. In terms of processing, phosphorylated by viral F10 kinase.

Its function is as follows. Required for the association between the dense viroplasm and the viral membranes to form the mature virion (MV). This is Protein A30 homolog from Fowlpox virus (strain NVSL) (FPV).